The chain runs to 275 residues: Voltage-dependent calcium channel gamma-5 subunit (275 aa).

4 helical membrane-spanning segments follow: residues 8–28 (ALTLLSSVFAVCGLGLLGIAV), 103–123 (FPLVSLFFMFIGFILSNIGHI), 129–149 (ILAFVSGIFFILSGLSLVVGL), and 181–201 (FAAISFLLTESAGVMSVYLFM).

The protein belongs to the PMP-22/EMP/MP20 family. CACNG subfamily. As to quaternary structure, the L-type calcium channel is composed of five subunits: alpha-1, alpha-2/delta, beta and gamma. Acts as an auxiliary subunit for AMPA-selective glutamate receptors (AMPARs). Found in a complex with GRIA1, GRIA2, GRIA3, GRIA4, CNIH2, CNIH3, CACNG2, CACNG3, CACNG4, CACNG7 and CACNG8. Interacts with GRIA1, GRIA2, GRIA3 and GRIA4. In terms of tissue distribution, brain. Enriched in Bergman glia, as well as a variety of neuronal populations including locus coeruleus, olfactory bulb, lateral septal nucleus, interpeduncular nucleus, and the CA2 and rostral/medial CA1 regions of hippocampus.

The protein resides in the membrane. Its subcellular location is the postsynaptic density membrane. Regulates the gating properties of AMPA-selective glutamate receptors (AMPARs). Modulates their gating properties by accelerating their rates of activation, deactivation and desensitization. Displays subunit-specific AMPA receptor regulation. Shows specificity for GRIA1, GRIA4 and the long isoform of GRIA2. Thought to stabilize the calcium channel in an inactivated (closed) state. This is Voltage-dependent calcium channel gamma-5 subunit (Cacng5) from Mus musculus (Mouse).